The chain runs to 396 residues: S-adenosylmethionine synthase (396 aa).

Glu-12 contributes to the Mg(2+) binding site. Position 18 (His-18) interacts with ATP. Glu-46 serves as a coordination point for K(+). L-methionine-binding residues include Glu-59 and Gln-102. ATP contacts are provided by residues 170–172 (DGK), 238–241 (SGRF), Asp-249, 255–256 (RK), Ala-272, Lys-276, and Lys-280. Asp-249 serves as a coordination point for L-methionine. Residue Lys-280 coordinates L-methionine.

This sequence belongs to the AdoMet synthase family. Homotetramer. Mn(2+) serves as cofactor. It depends on Mg(2+) as a cofactor. Co(2+) is required as a cofactor. The cofactor is K(+).

It is found in the cytoplasm. It catalyses the reaction L-methionine + ATP + H2O = S-adenosyl-L-methionine + phosphate + diphosphate. The protein operates within amino-acid biosynthesis; S-adenosyl-L-methionine biosynthesis; S-adenosyl-L-methionine from L-methionine: step 1/1. Catalyzes the formation of S-adenosylmethionine from methionine and ATP. The reaction comprises two steps that are both catalyzed by the same enzyme: formation of S-adenosylmethionine (AdoMet) and triphosphate, and subsequent hydrolysis of the triphosphate. In Triticum aestivum (Wheat), this protein is S-adenosylmethionine synthase (SAMS).